Consider the following 299-residue polypeptide: S-methyl-5'-thioadenosine phosphorylase (299 aa).

Phosphate-binding positions include Ser14, 56–57 (RH), and 89–90 (SA). Met191 provides a ligand contact to substrate. Residue Thr192 coordinates phosphate. 215 to 217 (DYD) serves as a coordination point for substrate.

The protein belongs to the PNP/MTAP phosphorylase family. MTAP subfamily. In terms of assembly, homohexamer. Dimer of a homotrimer.

It catalyses the reaction S-methyl-5'-thioadenosine + phosphate = 5-(methylsulfanyl)-alpha-D-ribose 1-phosphate + adenine. It functions in the pathway amino-acid biosynthesis; L-methionine biosynthesis via salvage pathway; S-methyl-5-thio-alpha-D-ribose 1-phosphate from S-methyl-5'-thioadenosine (phosphorylase route): step 1/1. In terms of biological role, catalyzes the reversible phosphorylation of S-methyl-5'-thioadenosine (MTA) to adenine and 5-methylthioribose-1-phosphate. Involved in the breakdown of MTA, a major by-product of polyamine biosynthesis. Responsible for the first step in the methionine salvage pathway after MTA has been generated from S-adenosylmethionine. Has broad substrate specificity with 6-aminopurine nucleosides as preferred substrates. In Gloeobacter violaceus (strain ATCC 29082 / PCC 7421), this protein is S-methyl-5'-thioadenosine phosphorylase.